Reading from the N-terminus, the 325-residue chain is MEEFTGIGYFYKKSIKNQLDKKDASLLWELPYYTLLYLANCVKKHNNSNNIDLCSIINAKSGLCSENCAFCSQSLHNSSKIKEYPLKPKEDILKQAKYIEKYSNRFSIVVSGKTVNDREYNEIIDAIKDIKKETNLKVCASLGLLDNSQLKELKDLDVRIHNNLETSKEYFDKICTTHTYDDKVKSITMAKKIGLEVCSGGIIGLGESLENRINLFYELKELDVEGIPINIYNPIKGTKTYELLNNNAIKQITPIEALKSIAICKLILPNKDVRLCGGREYNLRDWQSLSLLAIDGLMIGNYLTTNGRNIEDDIKMIVDGGFDGK.

The Radical SAM core domain occupies Asn46–Asn270. Cys64, Cys68, and Cys71 together coordinate [4Fe-4S] cluster. [2Fe-2S] cluster is bound by residues Ser107, Cys139, Cys198, and Arg274.

It belongs to the radical SAM superfamily. Biotin synthase family. Homodimer. The cofactor is [4Fe-4S] cluster. It depends on [2Fe-2S] cluster as a cofactor.

It carries out the reaction (4R,5S)-dethiobiotin + (sulfur carrier)-SH + 2 reduced [2Fe-2S]-[ferredoxin] + 2 S-adenosyl-L-methionine = (sulfur carrier)-H + biotin + 2 5'-deoxyadenosine + 2 L-methionine + 2 oxidized [2Fe-2S]-[ferredoxin]. It functions in the pathway cofactor biosynthesis; biotin biosynthesis; biotin from 7,8-diaminononanoate: step 2/2. In terms of biological role, catalyzes the conversion of dethiobiotin (DTB) to biotin by the insertion of a sulfur atom into dethiobiotin via a radical-based mechanism. The polypeptide is Biotin synthase (Methanococcus aeolicus (strain ATCC BAA-1280 / DSM 17508 / OCM 812 / Nankai-3)).